A 468-amino-acid chain; its full sequence is Pituitary adenylate cyclase-activating polypeptide type I receptor (468 aa).

A signal peptide spans 1–20 (MAGVVHVSLAALLLLPMAPA). The Extracellular portion of the chain corresponds to 21–152 (MHSDCIFKKE…TGDQDYYYLS (132 aa)). Disulfide bonds link Cys34-Cys63, Cys54-Cys118, and Cys77-Cys134. N-linked (GlcNAc...) asparagine glycans are attached at residues Asn48, Asn60, and Asn117. Residues 125–139 (EPFPHYFDACGFDEY) form an important for ADCYAP1/PACAP ligand binding and specificity region. Residues 153-177 (VKALYTVGYSTSLVTLTTAMVILCR) traverse the membrane as a helical segment. Over 178–187 (FRKLHCTRNF) the chain is Cytoplasmic. The chain crosses the membrane as a helical span at residues 188–208 (IHMNLFVSFMLRAISVFIKDW). At 209–223 (ILYAEQDSNHCFIST) the chain is on the extracellular side. Residues 224 to 249 (VECKAVMVFFHYCVVSNYFWLFIEGL) form a helical membrane-spanning segment. Cysteines 226 and 296 form a disulfide. Over 250 to 267 (YLFTLLVETFFPERRYFY) the chain is Cytoplasmic. The helical transmembrane segment at 268–290 (WYTIIGWGTPTVCVTVWATLRLY) threads the bilayer. Residues 291 to 302 (FDDTGCWDMNDS) lie on the Extracellular side of the membrane. An N-linked (GlcNAc...) asparagine glycan is attached at Asn300. The helical transmembrane segment at 303-329 (TALWWVIKGPVVGSIMVNFVLFIGIIV) threads the bilayer. The Cytoplasmic segment spans residues 330-347 (ILVQKLQSPDMGGNESSI). A helical transmembrane segment spans residues 348 to 374 (YLRLARSTLLLIPLFGIHYTVFAFSPE). N-linked (GlcNAc...) asparagine glycosylation occurs at Asn375. At 375–379 (NVSKR) the chain is on the extracellular side. Residues 380-403 (ERLVFELGLGSFQGFVVAVLYCFL) traverse the membrane as a helical segment. Residues 404-468 (NGEVQAEIKR…SGLPADNLAT (65 aa)) are Cytoplasmic-facing. Phosphoserine is present on residues Ser434 and Ser447.

The protein belongs to the G-protein coupled receptor 2 family. Interacts with maxadilan, a vasodilator peptide from Lutzomyia longipalpis saliva; the interaction results in ADCYAP1R1 activation. In terms of tissue distribution, most abundant in the brain, low expression in the lung, liver, thymus, spleen, pancreas and placenta.

It localises to the cell membrane. With respect to regulation, several synthetic peptides derived from maxadilan, a vasodilator peptide from Lutzomyia longipalpis saliva, act as antagonists for ADCYAP1R1. G protein-coupled receptor activated by the neuropeptide pituitary adenylate cyclase-activating polypeptide (ADCYAP1/PACAP). Binds both PACAP27 and PACAP38 bioactive peptides. Ligand binding causes a conformation change that triggers signaling via guanine nucleotide-binding proteins (G proteins) and modulates the activity of downstream effectors. Activates cAMP-dependent pathway. May regulate the release of adrenocorticotropin, luteinizing hormone, growth hormone, prolactin, epinephrine, and catecholamine. May play a role in spermatogenesis and sperm motility. Causes smooth muscle relaxation and secretion in the gastrointestinal tract. This is Pituitary adenylate cyclase-activating polypeptide type I receptor from Homo sapiens (Human).